A 365-amino-acid chain; its full sequence is Peptide chain release factor 2 (365 aa).

Glutamine 252 is modified (N5-methylglutamine).

The protein belongs to the prokaryotic/mitochondrial release factor family. In terms of processing, methylated by PrmC. Methylation increases the termination efficiency of RF2.

It localises to the cytoplasm. In terms of biological role, peptide chain release factor 2 directs the termination of translation in response to the peptide chain termination codons UGA and UAA. The sequence is that of Peptide chain release factor 2 from Klebsiella pneumoniae (strain 342).